Here is a 932-residue protein sequence, read N- to C-terminus: Glycine dehydrogenase (decarboxylating) (932 aa).

Lysine 685 bears the N6-(pyridoxal phosphate)lysine mark.

It belongs to the GcvP family. As to quaternary structure, the glycine cleavage system is composed of four proteins: P, T, L and H. It depends on pyridoxal 5'-phosphate as a cofactor.

It carries out the reaction N(6)-[(R)-lipoyl]-L-lysyl-[glycine-cleavage complex H protein] + glycine + H(+) = N(6)-[(R)-S(8)-aminomethyldihydrolipoyl]-L-lysyl-[glycine-cleavage complex H protein] + CO2. Its function is as follows. The glycine cleavage system catalyzes the degradation of glycine. The P protein binds the alpha-amino group of glycine through its pyridoxal phosphate cofactor; CO(2) is released and the remaining methylamine moiety is then transferred to the lipoamide cofactor of the H protein. The sequence is that of Glycine dehydrogenase (decarboxylating) from Brucella suis biovar 1 (strain 1330).